A 355-amino-acid polypeptide reads, in one-letter code: UDP-N-acetylglucosamine--N-acetylmuramyl-(pentapeptide) pyrophosphoryl-undecaprenol N-acetylglucosamine transferase (355 aa).

Residues 15–17 (TGG), N127, R163, S191, I244, 263–268 (ALTVSE), and Q288 each bind UDP-N-acetyl-alpha-D-glucosamine.

The protein belongs to the glycosyltransferase 28 family. MurG subfamily.

The protein localises to the cell inner membrane. The catalysed reaction is di-trans,octa-cis-undecaprenyl diphospho-N-acetyl-alpha-D-muramoyl-L-alanyl-D-glutamyl-meso-2,6-diaminopimeloyl-D-alanyl-D-alanine + UDP-N-acetyl-alpha-D-glucosamine = di-trans,octa-cis-undecaprenyl diphospho-[N-acetyl-alpha-D-glucosaminyl-(1-&gt;4)]-N-acetyl-alpha-D-muramoyl-L-alanyl-D-glutamyl-meso-2,6-diaminopimeloyl-D-alanyl-D-alanine + UDP + H(+). Its pathway is cell wall biogenesis; peptidoglycan biosynthesis. Cell wall formation. Catalyzes the transfer of a GlcNAc subunit on undecaprenyl-pyrophosphoryl-MurNAc-pentapeptide (lipid intermediate I) to form undecaprenyl-pyrophosphoryl-MurNAc-(pentapeptide)GlcNAc (lipid intermediate II). The chain is UDP-N-acetylglucosamine--N-acetylmuramyl-(pentapeptide) pyrophosphoryl-undecaprenol N-acetylglucosamine transferase from Salmonella typhi.